The chain runs to 248 residues: Large ribosomal subunit protein uL2 (248 aa).

The disordered stretch occupies residues 203–248 (AHPAGGGHHPKGLTPAPRNAPPGRKVGHIAPRRTGRKKGASRTPTQ). Positions 227 to 242 (KVGHIAPRRTGRKKGA) are enriched in basic residues.

Belongs to the universal ribosomal protein uL2 family. As to quaternary structure, part of the 50S ribosomal subunit. Forms a bridge to the 30S subunit in the 70S ribosome.

Its function is as follows. One of the primary rRNA binding proteins. Required for association of the 30S and 50S subunits to form the 70S ribosome, for tRNA binding and peptide bond formation. It has been suggested to have peptidyltransferase activity; this is somewhat controversial. Makes several contacts with the 16S rRNA in the 70S ribosome. The protein is Large ribosomal subunit protein uL2 of Thermofilum pendens (strain DSM 2475 / Hrk 5).